The chain runs to 365 residues: Peptide chain release factor 2 (365 aa).

Q251 is subject to N5-methylglutamine.

This sequence belongs to the prokaryotic/mitochondrial release factor family. Methylated by PrmC. Methylation increases the termination efficiency of RF2.

It localises to the cytoplasm. Peptide chain release factor 2 directs the termination of translation in response to the peptide chain termination codons UGA and UAA. The chain is Peptide chain release factor 2 from Campylobacter jejuni (strain RM1221).